Here is a 450-residue protein sequence, read N- to C-terminus: Asparagine--tRNA ligase (450 aa).

It belongs to the class-II aminoacyl-tRNA synthetase family. Homodimer.

The protein resides in the cytoplasm. It catalyses the reaction tRNA(Asn) + L-asparagine + ATP = L-asparaginyl-tRNA(Asn) + AMP + diphosphate + H(+). This chain is Asparagine--tRNA ligase, found in Mycoplasmopsis pulmonis (strain UAB CTIP) (Mycoplasma pulmonis).